Here is a 1487-residue protein sequence, read N- to C-terminus: Protein clueless (1487 aa).

Disordered regions lie at residues 1–94 (MALE…NGDA) and 110–140 (GATA…EAAA). A compositionally biased stretch (basic residues) spans 56-65 (TKKKGKKNRN). Residues 111–126 (ATAAAGATEAAAEVGS) are compositionally biased toward low complexity. Serine 284 is subject to Phosphoserine. The region spanning 438-680 (RAEDAFSSKL…RTFPPDVNFL (243 aa)) is the Clu domain. Residues 739–785 (QAEKELPSITEKQEEPEKEQAEKSSAEQPEKEKEKEKDKEDEQKESK) are compositionally biased toward basic and acidic residues. Disordered regions lie at residues 739–794 (QAEK…TKSA) and 980–1040 (VSSE…TAST). Positions 988 to 1005 (KQSRNNGGKHNKHNKSNK) are enriched in basic residues. Over residues 1009–1019 (PQSTSAAAATQ) the composition is skewed to polar residues. Low complexity predominate over residues 1020-1040 (NGHSSTAANGSANSAANTAST). TPR repeat units follow at residues 1140–1173 (AYNF…LNNV), 1266–1299 (ALID…NLKY), and 1301–1334 (GNKA…EKET). The segment at 1456–1487 (DTEQPKEGSEVEGATATQLTNGSEDSTTTVSS) is disordered. Polar residues predominate over residues 1470 to 1487 (TATQLTNGSEDSTTTVSS).

Belongs to the CLU family.

It is found in the cytoplasm. Its function is as follows. mRNA-binding protein involved in proper cytoplasmic distribution of mitochondria. The protein is Protein clueless of Drosophila mojavensis (Fruit fly).